A 438-amino-acid chain; its full sequence is Ribosomal protein uS12 methylthiotransferase RimO (438 aa).

Residues 5-115 form the MTTase N-terminal domain; it reads PRVGFVSLGC…VMSAVHTHLP (111 aa). Residues Cys14, Cys50, Cys79, Cys146, Cys150, and Cys153 each contribute to the [4Fe-4S] cluster site. Residues 132-369 enclose the Radical SAM core domain; that stretch reads LTPKHYAYLK…MAVQAEISAR (238 aa). The TRAM domain maps to 372-438; that stretch reads ERRVGQTLQV…SEHDLWGERR (67 aa).

Belongs to the methylthiotransferase family. RimO subfamily. It depends on [4Fe-4S] cluster as a cofactor.

The protein localises to the cytoplasm. It catalyses the reaction L-aspartate(89)-[ribosomal protein uS12]-hydrogen + (sulfur carrier)-SH + AH2 + 2 S-adenosyl-L-methionine = 3-methylsulfanyl-L-aspartate(89)-[ribosomal protein uS12]-hydrogen + (sulfur carrier)-H + 5'-deoxyadenosine + L-methionine + A + S-adenosyl-L-homocysteine + 2 H(+). Catalyzes the methylthiolation of an aspartic acid residue of ribosomal protein uS12. The protein is Ribosomal protein uS12 methylthiotransferase RimO of Chromobacterium violaceum (strain ATCC 12472 / DSM 30191 / JCM 1249 / CCUG 213 / NBRC 12614 / NCIMB 9131 / NCTC 9757 / MK).